A 127-amino-acid polypeptide reads, in one-letter code: 13 kDa ribonucleoprotein-associated protein (127 aa).

The protein belongs to the eukaryotic ribosomal protein eL8 family. Component of the U3 snoRNP particle. Binds to the C'/D and B/C motifs in U3 snoRNA. Component of the 25S U4/U6.U5 tri-snRNP particle, a subcomplex of the spliceosome. Binds to the 5' stem-loop of U4 snRNA.

It localises to the nucleus. It is found in the nucleolus. Its function is as follows. Common component of the spliceosome and rRNA processing machinery. In association with the spliceosomal U4/U6.U5 tri-snRNP particle, required for splicing of pre-mRNA. In association with box C/D snoRNPs, required for processing of pre-ribosomal RNA (rRNA) and site-specific 2'-O-methylation of substrate RNAs. Essential for the accumulation and stability of U4 snRNA, U6 snRNA, and box C/D snoRNAs. The sequence is that of 13 kDa ribonucleoprotein-associated protein (SNU13) from Cryptococcus neoformans var. neoformans serotype D (strain B-3501A) (Filobasidiella neoformans).